A 159-amino-acid polypeptide reads, in one-letter code: Ribosomal RNA large subunit methyltransferase H (159 aa).

S-adenosyl-L-methionine-binding positions include Leu76, Gly108, and 127-132; that span reads FSKMTF.

It belongs to the RNA methyltransferase RlmH family. As to quaternary structure, homodimer.

It localises to the cytoplasm. It carries out the reaction pseudouridine(1915) in 23S rRNA + S-adenosyl-L-methionine = N(3)-methylpseudouridine(1915) in 23S rRNA + S-adenosyl-L-homocysteine + H(+). In terms of biological role, specifically methylates the pseudouridine at position 1915 (m3Psi1915) in 23S rRNA. The sequence is that of Ribosomal RNA large subunit methyltransferase H from Clostridium botulinum (strain Alaska E43 / Type E3).